The following is an 87-amino-acid chain: Tachykinin-1 (87 aa).

Positions methionine 1–alanine 22 are cleaved as a signal peptide. The propeptide occupies aspartate 23–valine 37. Methionine 49 bears the Methionine amide mark. Residues serine 52–lysine 87 constitute a propeptide that is removed on maturation. A disordered region spans residues glutamine 61–lysine 87. Residues glycine 73–lysine 87 show a composition bias toward basic residues.

The protein belongs to the tachykinin family. In terms of tissue distribution, expressed in the posterior salivary gland and more specifically in the mucus-secreting gland cells.

It localises to the secreted. In terms of biological role, tachykinins are active peptides which excite neurons, evoke behavioral responses, are potent vasodilators and secretagogues, and contract (directly or indirectly) many smooth muscles. The protein is Tachykinin-1 of Octopus vulgaris (Common octopus).